A 320-amino-acid polypeptide reads, in one-letter code: MADNEFDIDAFFSTEKKSTSSENQHCGFIAIVGRPNVGKSTLLNKILGQKISITSRKPQTTRHRIMGVDTDGDYQAIYVDTPGLHIEEKRAINRLMNRAANSSLSDVNLVFFLVDGTHWTNDDEMVLNKLQKANFPVVLCVNKVDNVQDRNEVMQHMMEMSKKMNFVDVVPISAKQGKNIDVLRKHVRDHLPKAVHHFPEEYVTDRSQRFMASEIVREKLMRFTGDELPYSVTVEIERFDYNPETDGFHINALILVERSGQKKMVIGKGGEKIKTIGREARLDMEELFGRKVYLETWVKVKSGWADDERALRSLGYIDDL.

Positions 25 to 193 (HCGFIAIVGR…RKHVRDHLPK (169 aa)) constitute an Era-type G domain. The segment at 33–40 (GRPNVGKS) is G1. 33-40 (GRPNVGKS) is a binding site for GTP. The G2 stretch occupies residues 59-63 (QTTRH). The interval 80-83 (DTPG) is G3. GTP contacts are provided by residues 80 to 84 (DTPGL) and 142 to 145 (NKVD). Residues 142–145 (NKVD) form a G4 region. The tract at residues 172–174 (ISA) is G5. A KH type-2 domain is found at 216 to 302 (VREKLMRFTG…YLETWVKVKS (87 aa)).

The protein belongs to the TRAFAC class TrmE-Era-EngA-EngB-Septin-like GTPase superfamily. Era GTPase family. In terms of assembly, monomer.

Its subcellular location is the cytoplasm. It localises to the cell inner membrane. In terms of biological role, an essential GTPase that binds both GDP and GTP, with rapid nucleotide exchange. Plays a role in 16S rRNA processing and 30S ribosomal subunit biogenesis and possibly also in cell cycle regulation and energy metabolism. The chain is GTPase Era from Vibrio vulnificus (strain CMCP6).